The following is a 289-amino-acid chain: Ferri-bacillibactin esterase BesA (289 aa).

Active-site charge relay system residues include Ser-163, Glu-225, and His-263.

Belongs to the esterase D family.

Its subcellular location is the cytoplasm. Functionally, catalyzes the hydrolysis of the trilactone cycle of ferri-bacillibactin (ferri-BB) complex, leading to the formation of bacillibactin monomers and to cytosolic iron release, thus making iron available for metabolic use. Can also hydrolyze bacillibactin (BB), however the catalytic efficiency for ferri-BB hydrolysis is much higher than for BB. The chain is Ferri-bacillibactin esterase BesA (besA) from Bacillus subtilis (strain 168).